Reading from the N-terminus, the 228-residue chain is MQKLKQQVFEANMDLPRYGLVTFTWGNVSAIDRERGLVVIKPSGVAYETMKADDMVVVDMSGKVVEGKYRPSSDTATHLELYRRYPSLGGIVHTHSTHATAWAPAGLAIPALGTTHADYFFGDIPCTRGLSEEEVQGEYELNTGKVIIETLGDAEPLHTPGIVVYQHGPFAWGKDAHDAVHNAVVMEEVAKMAWIARSINPQLNHIDSFLMNKHFMRKHGPNAYYGQK.

Substrate is bound by residues 26 to 27 (GN), 43 to 44 (SG), and 72 to 73 (SS). The Zn(2+) site is built by D74, H93, and H95. The active-site Proton donor/acceptor is D118. Position 167 (H167) interacts with Zn(2+). The active-site Proton donor/acceptor is Y225.

This sequence belongs to the aldolase class II family. AraD/FucA subfamily. Zn(2+) serves as cofactor.

The enzyme catalyses L-ribulose 5-phosphate = D-xylulose 5-phosphate. It functions in the pathway cofactor degradation; L-ascorbate degradation; D-xylulose 5-phosphate from L-ascorbate: step 4/4. Functionally, catalyzes the isomerization of L-ribulose 5-phosphate to D-xylulose 5-phosphate. Is involved in the anaerobic L-ascorbate utilization. The protein is L-ribulose-5-phosphate 4-epimerase UlaF of Shigella boydii serotype 18 (strain CDC 3083-94 / BS512).